The sequence spans 404 residues: Probable pectate lyase 18 (404 aa).

The signal sequence occupies residues 1–20; it reads MSTLFFTFSLLLLAPLLVIS. An N-linked (GlcNAc...) asparagine glycan is attached at Asn37. Cys159 and Cys178 are joined by a disulfide. An N-linked (GlcNAc...) asparagine glycan is attached at Asn191. Positions 200, 202, 224, and 228 each coordinate Ca(2+). Arg280 is a catalytic residue.

This sequence belongs to the polysaccharide lyase 1 family. Requires Ca(2+) as cofactor. As to expression, predominantly found in the pistil where it is found in the outer five layers of the strands of transmitting tissue within the upper two-thirds of the style. Found at much lower levels in the anthers and vegetative organs.

It is found in the secreted. It carries out the reaction Eliminative cleavage of (1-&gt;4)-alpha-D-galacturonan to give oligosaccharides with 4-deoxy-alpha-D-galact-4-enuronosyl groups at their non-reducing ends.. It functions in the pathway glycan metabolism; pectin degradation; 2-dehydro-3-deoxy-D-gluconate from pectin: step 2/5. May have a role in the development of the transmitting tissue of the style and/or in the events related to pollination such as some aspect in the facilitation of compatible pollen tube growth. This chain is Probable pectate lyase 18, found in Solanum lycopersicum (Tomato).